Consider the following 89-residue polypeptide: Large ribosomal subunit protein eL34 (89 aa).

The segment at 1–22 is disordered; that stretch reads MPAPRYKSGSSKKVYRKAPGNS.

This sequence belongs to the eukaryotic ribosomal protein eL34 family.

This chain is Large ribosomal subunit protein eL34, found in Methanococcus maripaludis (strain C5 / ATCC BAA-1333).